A 587-amino-acid chain; its full sequence is tRNA (guanine(37)-N(1))-methyltransferase 2 (587 aa).

Residues R360 and 430–431 (DA) contribute to the S-adenosyl-L-methionine site. Positions 446 to 469 (ASTRSRKEDVTNKDGNHVTPTEPM) are disordered. A compositionally biased stretch (basic and acidic residues) spans 450–461 (SRKEDVTNKDGN). N478 is an S-adenosyl-L-methionine binding site.

It belongs to the class I-like SAM-binding methyltransferase superfamily. TRM5/TYW2 family. In terms of assembly, monomer.

It is found in the mitochondrion matrix. The protein resides in the nucleus. It localises to the cytoplasm. The catalysed reaction is guanosine(37) in tRNA + S-adenosyl-L-methionine = N(1)-methylguanosine(37) in tRNA + S-adenosyl-L-homocysteine + H(+). Specifically methylates the N1 position of guanosine-37 in various cytoplasmic and mitochondrial tRNAs. Methylation is not dependent on the nature of the nucleoside 5' of the target nucleoside. This is the first step in the biosynthesis of wybutosine (yW), a modified base adjacent to the anticodon of tRNAs and required for accurate decoding. This chain is tRNA (guanine(37)-N(1))-methyltransferase 2, found in Phaeodactylum tricornutum (strain CCAP 1055/1).